The chain runs to 286 residues: Shikimate dehydrogenase (NADP(+)) (286 aa).

Residues 20–22 and T67 contribute to the shikimate site; that span reads SLS. K71 functions as the Proton acceptor in the catalytic mechanism. N92 and D107 together coordinate shikimate. NADP(+) contacts are provided by residues 132-136 and M228; that span reads GAGGA. A shikimate-binding site is contributed by Y230. G251 contacts NADP(+).

Belongs to the shikimate dehydrogenase family. Homodimer.

The catalysed reaction is shikimate + NADP(+) = 3-dehydroshikimate + NADPH + H(+). Its pathway is metabolic intermediate biosynthesis; chorismate biosynthesis; chorismate from D-erythrose 4-phosphate and phosphoenolpyruvate: step 4/7. In terms of biological role, involved in the biosynthesis of the chorismate, which leads to the biosynthesis of aromatic amino acids. Catalyzes the reversible NADPH linked reduction of 3-dehydroshikimate (DHSA) to yield shikimate (SA). This chain is Shikimate dehydrogenase (NADP(+)), found in Geobacter sulfurreducens (strain ATCC 51573 / DSM 12127 / PCA).